Reading from the N-terminus, the 759-residue chain is Subtilisin-like protease SBT3.10 (759 aa).

The first 25 residues, 1 to 25, serve as a signal peptide directing secretion; that stretch reads MSKTIILLAFFLSIVLNVQISFVVA. A propeptide spans 26–108 (activation peptide); it reads ESKVYVVYLG…VIPNTLYEMT (83 aa). Residues 29–106 enclose the Inhibitor I9 domain; that stretch reads VYVVYLGEKE…VQVIPNTLYE (78 aa). The 495-residue stretch at 112–606 folds into the Peptidase S8 domain; that stretch reads TWDYLGVSPG…GGLINPEKAV (495 aa). Aspartate 142 acts as the Charge relay system in catalysis. N-linked (GlcNAc...) asparagine glycans are attached at residues asparagine 175 and asparagine 202. Residue histidine 218 is the Charge relay system of the active site. Residues asparagine 233 and asparagine 361 are each glycosylated (N-linked (GlcNAc...) asparagine). Positions 390-464 constitute a PA domain; that stretch reads DCEKLSANPK…ELGTDILFYI (75 aa). Serine 537 functions as the Charge relay system in the catalytic mechanism.

The protein belongs to the peptidase S8 family.

It is found in the secreted. This chain is Subtilisin-like protease SBT3.10, found in Arabidopsis thaliana (Mouse-ear cress).